Reading from the N-terminus, the 170-residue chain is Putative pre-16S rRNA nuclease (170 aa).

Basic and acidic residues predominate over residues 1–18; sequence MGTDDRLPDRPGADDPGR. A disordered region spans residues 1–22; the sequence is MGTDDRLPDRPGADDPGRGRRI.

It belongs to the YqgF nuclease family.

It localises to the cytoplasm. Its function is as follows. Could be a nuclease involved in processing of the 5'-end of pre-16S rRNA. This Mycolicibacterium smegmatis (strain ATCC 700084 / mc(2)155) (Mycobacterium smegmatis) protein is Putative pre-16S rRNA nuclease.